The chain runs to 203 residues: Xrcc4-like factor 1 (203 aa).

This sequence belongs to the XRCC4-XLF family. XLF subfamily.

Its subcellular location is the nucleus. Involved in double-strand break repair via non-homologous end joining (NHEJ); the repair of a double-strand break in DNA in which the two broken ends are rejoined with little or no sequence complementarity. Has a role in meiosis. The protein is Xrcc4-like factor 1 (xlf1) of Schizosaccharomyces pombe (strain 972 / ATCC 24843) (Fission yeast).